The primary structure comprises 128 residues: Small ribosomal subunit protein uS14m (128 aa).

It belongs to the universal ribosomal protein uS14 family. In terms of assembly, component of the mitochondrial ribosome small subunit (28S) which comprises a 12S rRNA and about 30 distinct proteins. Interacts with LIAT1.

It localises to the mitochondrion. This Mus musculus (Mouse) protein is Small ribosomal subunit protein uS14m (Mrps14).